The primary structure comprises 821 residues: MNEWSEMLVCRDYCALMMRDRKECDARCCRDGEGERVRARERLDATVAGLTELEYLRQRQELLVRSVLSCPEAAGQDKPCLTVDDSYLNTEEKLLEENILLLRKQLNCLRRRDAGLINQLQELDRQISDLRLDTETSHEHVETDSRPSSGFYDLSDGASGSLSNSSNSVFSECLSSCRSTTCLCTPLDTSLCASEGRLKPADDPGSCAECDCHCEDSSSGTVRRSLSASYSPSPDSSCDGISKFHCDLIAKNGNDVYRYPSPLHAVAVQSPIFIQSMTSHLKDDCNFSKPGEALNDEQKPEQVVGSQTSSWHASQMLPNKKLDSYIYGLLQRRAQPLRTNKPRTSINTDPSKSILRQASLCSRAPASVQAQQWTSDLKPNWQTCLQDASATSTEPSTASPQRQWSAESKGGTPQNGAYLSSSQPQNSYSTTNENTNCLLKKKVSGTSKGQLLSATPKDCPDLGSPKAVSSPKLNKHCFYNVEDNKTGQAMKASPLKRSPKTQTSLSCGKDSEQLAQELVSLGSSSQSQDEGGPLVSAQYIPAQKQNVNLQKGGTKNIKIVKVKNSASSKSRPQVFEHVSETVRDKHRTGSRRTRQVDEVHHLHKSSKKASAKTKRIPASIPEGRILERHTSSSGARSSAQRHHGHHRHHEAVLAKPKYKRNDFHRRPRGLHEIPYEEAYRRAHRRQKREMLSHMYLPSNAHYTSPYAYVGSDSEYSAECASLFHSTILDTSEDERSNYTTNCFGDSESSASEADYVAESSTSSDSEGSAGVNWRQISQAGSGSHGMTSAQAKAFVKIKASHNLKKKILRFRSGSLKLMTTV.

Residues 88 to 136 (LNTEEKLLEENILLLRKQLNCLRRRDAGLINQLQELDRQISDLRLDTET) adopt a coiled-coil conformation. Disordered stretches follow at residues 288–312 (SKPGEALNDEQKPEQVVGSQTSSWH), 386–432 (QDAS…STTN), 564–615 (NSAS…KTKR), and 627–655 (ERHTSSSGARSSAQRHHGHHRHHEAVLAK). The span at 388 to 400 (ASATSTEPSTASP) shows a compositional bias: low complexity. A compositionally biased stretch (polar residues) spans 401–432 (QRQWSAESKGGTPQNGAYLSSSQPQNSYSTTN). Basic residues-rich tracts occupy residues 584–593 (DKHRTGSRRT), 601–615 (HLHKSSKKASAKTKR), and 639–649 (AQRHHGHHRHH). The PDZ-binding motif lies at 818 to 821 (MTTV).

The protein belongs to the dapper family. As to quaternary structure, interacts with dvl2.

The protein resides in the cytoplasm. Its function is as follows. Involved in regulation of intracellular signaling pathways during development. Specifically thought to play a role in canonical and/or non-canonical Wnt signaling pathways through interaction with DSH (Dishevelled) family proteins. Binds to dvl2 and may regulate the degradation of ctnnb1/beta-catenin, thereby modulating the transcriptional activation of target genes of the Wnt signaling pathway. Seems to activate the canonical Wnt signaling pathway. The polypeptide is Dapper homolog 1 (dact1) (Danio rerio (Zebrafish)).